Reading from the N-terminus, the 436-residue chain is MFDSTLNPLWQRYILAVQEEVKPALGCTEPISLALAAAVAAAELEGPVERVEAWVSPNLMKNGLGVTVPGTGMVGLPIAAALGALGGNANAGLEVLKDATAQAIADAKALLAAGKVSVKIQEPCDEILFSRAKVWNGEKWACVTIVGGHTNIVHIETHDGVVFTQQACVAEGEQESPLTVLSRTTLAEILKFVNEVPFAAIRFILDSAKLNCALSQEGLSGKWGLHIGATLEKQCERGLLAKDLSSSIVIRTSAASDARMGGATLPAMSNSGSGNQGITATMPVVVVAEHFGADDERLARALMLSHLSAIYIHNQLPRLSALCAATTAAMGAAAGMAWLVDGRYETISMAISSMIGDVSGMICDGASNSCAMKVSTSASAAWKAVLMALDDTAVTGNEGIVAHDVEQSIANLCALASHSMQQTDRQIIEIMASKAR.

This sequence belongs to the UPF0597 family.

The protein is UPF0597 protein YhaM of Escherichia coli (strain K12 / MC4100 / BW2952).